The chain runs to 325 residues: Probable cell division protein WhiA (325 aa).

The segment at residues 273 to 306 (SLEELGALADPPLTKDAVAGRIRRLLALADKRAN) is a DNA-binding region (H-T-H motif).

It belongs to the WhiA family.

Involved in cell division and chromosome segregation. The sequence is that of Probable cell division protein WhiA from Parafrankia sp. (strain EAN1pec).